The sequence spans 383 residues: 8-amino-7-oxononanoate synthase (383 aa).

Residue R21 coordinates substrate. 108–109 (GY) is a pyridoxal 5'-phosphate binding site. Position 133 (H133) interacts with substrate. Residues S179, H207, and T233 each contribute to the pyridoxal 5'-phosphate site. At K236 the chain carries N6-(pyridoxal phosphate)lysine. T350 contacts substrate.

The protein belongs to the class-II pyridoxal-phosphate-dependent aminotransferase family. BioF subfamily. In terms of assembly, homodimer. Requires pyridoxal 5'-phosphate as cofactor.

It carries out the reaction 6-carboxyhexanoyl-[ACP] + L-alanine + H(+) = (8S)-8-amino-7-oxononanoate + holo-[ACP] + CO2. Its pathway is cofactor biosynthesis; biotin biosynthesis. Functionally, catalyzes the decarboxylative condensation of pimeloyl-[acyl-carrier protein] and L-alanine to produce 8-amino-7-oxononanoate (AON), [acyl-carrier protein], and carbon dioxide. This is 8-amino-7-oxononanoate synthase from Yersinia pseudotuberculosis serotype IB (strain PB1/+).